We begin with the raw amino-acid sequence, 572 residues long: E3 ubiquitin-protein ligase ZFP91 (572 aa).

Positions 1-12 are enriched in basic and acidic residues; it reads MPGETEEPRSPE. Residues 1-308 form a disordered region; that stretch reads MPGETEEPRS…PRLPKRRKKP (308 aa). Over residues 61 to 70 the composition is skewed to low complexity; sequence AAAAAAAAAA. Basic residues predominate over residues 72-85; that stretch reads SRRRKAEYPRRRRS. A phosphoserine mark is found at Ser86 and Ser106. Positions 122-131 are enriched in basic and acidic residues; the sequence is LTTDKDPKEE. Residues 143 to 162 are compositionally biased toward low complexity; it reads SITTTRASRSWRSSSRTSIS. A compositionally biased stretch (acidic residues) spans 209-225; the sequence is SDEEEEEEEEMLISEEE. Composition is skewed to basic and acidic residues over residues 226–247 and 254–271; these read IPFK…ETPK and KVKE…VEVE. Acidic residues predominate over residues 272–284; that stretch reads VKEEENEIREDEE. 5 consecutive C2H2-type zinc fingers follow at residues 313–338, 344–368, 374–396, 402–424, and 432–455; these read VRCE…KYQH, YVCP…AKHH, YICE…RMIH, LQCE…MKKH, and FSCN…AKSH. The tract at residues 340-370 is interaction with MAP3K14/NIK; sequence LKKKYVCPHPSCGRLFRLQKQLLRHAKHHTD.

The protein belongs to the krueppel C2H2-type zinc-finger protein family. In terms of assembly, interacts with MAP3K14/NIK. As to expression, found in all the examined tissues including brain, heart, kidney, lung, liver, spleen, thymus, skeletal muscle, ovary and testis.

It is found in the nucleus. The catalysed reaction is S-ubiquitinyl-[E2 ubiquitin-conjugating enzyme]-L-cysteine + [acceptor protein]-L-lysine = [E2 ubiquitin-conjugating enzyme]-L-cysteine + N(6)-ubiquitinyl-[acceptor protein]-L-lysine.. Its pathway is protein modification; protein ubiquitination. Atypical E3 ubiquitin-protein ligase that mediates 'Lys-63'-linked ubiquitination of MAP3K14/NIK, leading to stabilize and activate MAP3K14/NIK. It thereby acts as an activator of the non-canonical NF-kappa-B2/NFKB2 pathway. May also play an important role in cell proliferation and/or anti-apoptosis. The sequence is that of E3 ubiquitin-protein ligase ZFP91 (Zfp91) from Mus musculus (Mouse).